Reading from the N-terminus, the 169-residue chain is Probable chorismate pyruvate-lyase (169 aa).

Substrate is bound by residues arginine 71, isoleucine 110, and glutamate 150.

The protein belongs to the UbiC family.

The protein localises to the cytoplasm. It carries out the reaction chorismate = 4-hydroxybenzoate + pyruvate. It functions in the pathway cofactor biosynthesis; ubiquinone biosynthesis. Removes the pyruvyl group from chorismate, with concomitant aromatization of the ring, to provide 4-hydroxybenzoate (4HB) for the ubiquinone pathway. The polypeptide is Probable chorismate pyruvate-lyase (Acinetobacter baumannii (strain ATCC 17978 / DSM 105126 / CIP 53.77 / LMG 1025 / NCDC KC755 / 5377)).